A 208-amino-acid chain; its full sequence is Coiled-coil domain-containing protein 25 (208 aa).

Over 1-105 (MVFYFTSSSV…SNLKKTADMD (105 aa)) the chain is Extracellular. A DNA-binding region spans residues 21 to 25 (KDKYE). The residue at position 23 (lysine 23) is an N6-acetyllysine. Residues 106-122 (VGQIGFHRQKDVKIVTV) form a helical membrane-spanning segment. A coiled-coil region spans residues 117-187 (VKIVTVEKKV…REMDELRSYS (71 aa)). Over 123–208 (EKKVNEILNR…QDGNDSDEFM (86 aa)) the chain is Cytoplasmic. Over residues 144 to 184 (LAAEKEGRDREERNEKKAQIQEMKRKEKEEMKKKREMDELR) the composition is skewed to basic and acidic residues. The segment at 144-208 (LAAEKEGRDR…QDGNDSDEFM (65 aa)) is disordered. At serine 204 the chain carries Phosphoserine.

This sequence belongs to the CCDC25 family. In terms of assembly, interacts (via cytoplasmic region) with ILK.

The protein localises to the cell membrane. The protein resides in the endomembrane system. Functionally, transmembrane receptor that senses neutrophil extracellular traps (NETs) and triggers the ILK-PARVB pathway to enhance cell motility. NETs are mainly composed of DNA fibers and are released by neutrophils to bind pathogens during inflammation. Formation of NETs is also associated with cancer metastasis, NET-DNA acting as a chemotactic factor to attract cancer cells. Specifically binds NETs on its extracellular region, in particular the 8-OHdG-enriched DNA present in NETs, and recruits ILK, initiating the ILK-PARVB cascade to induce cytoskeleton rearrangement and directional migration of cells. In the context of cancer, promotes cancer metastasis by sensing NETs and promoting migration of tumor cells. The protein is Coiled-coil domain-containing protein 25 of Mus musculus (Mouse).